We begin with the raw amino-acid sequence, 441 residues long: Tubulin alpha chain (441 aa).

Gln-11, Glu-68, Ser-137, Gly-141, Thr-142, Thr-176, Asn-203, and Asn-224 together coordinate GTP. Position 68 (Glu-68) interacts with Mg(2+). Glu-250 is a catalytic residue.

This sequence belongs to the tubulin family. In terms of assembly, dimer of alpha and beta chains. A typical microtubule is a hollow water-filled tube with an outer diameter of 25 nm and an inner diameter of 15 nM. Alpha-beta heterodimers associate head-to-tail to form protofilaments running lengthwise along the microtubule wall with the beta-tubulin subunit facing the microtubule plus end conferring a structural polarity. Microtubules usually have 13 protofilaments but different protofilament numbers can be found in some organisms and specialized cells. It depends on Mg(2+) as a cofactor.

Its subcellular location is the cytoplasm. It localises to the cytoskeleton. It catalyses the reaction GTP + H2O = GDP + phosphate + H(+). Its function is as follows. Tubulin is the major constituent of microtubules, a cylinder consisting of laterally associated linear protofilaments composed of alpha- and beta-tubulin heterodimers. Microtubules grow by the addition of GTP-tubulin dimers to the microtubule end, where a stabilizing cap forms. Below the cap, tubulin dimers are in GDP-bound state, owing to GTPase activity of alpha-tubulin. This is Tubulin alpha chain (TUB1) from Encephalitozoon cuniculi (strain GB-M1) (Microsporidian parasite).